Here is a 707-residue protein sequence, read N- to C-terminus: Dendrin (707 aa).

5 disordered regions span residues 1-22, 67-86, 94-195, 213-273, and 342-377; these read MLDGPLFSEGPDSPRELQDEES, QNRTCRLRPGSPEPPPRRPW, ATNW…PWGG, AGTA…KKRL, and TEVALSGSTISSPPRPVPRSRQHLRGSRKGKEGSEE. Positions 103–134 form a coiled coil; it reads AEVRAREQEKRKAASQEREAKETERKRRKAGG. Over residues 105–127 the composition is skewed to basic and acidic residues; the sequence is VRAREQEKRKAASQEREAKETER. Residues 113–131 are nuclear localization; sequence RKAASQEREAKETERKRRK. An interaction with MAGI2 region spans residues 186–236; the sequence is GVAWAGPWGGRRPGPPSYEAHLLLRGAAGTAPRRRWDRPPPYVAPPSYEGP. An interaction with ACTN1 region spans residues 340 to 434; it reads PVTEVALSGS…LEVWKVTRRA (95 aa). The span at 359-369 shows a compositional bias: basic residues; the sequence is PRSRQHLRGSR. Ser387 bears the Phosphoserine mark. Disordered regions lie at residues 389–421 and 517–707; these read KKPPVRHSQTLPRPWAPGGTGWKESLGQREGTE and RVLN…GKRE. Residues 406 to 707 form an interaction with CD2AP and NPHS1 region; that stretch reads GGTGWKESLG…TRKTPQGKRE (302 aa). Composition is skewed to basic and acidic residues over residues 524–544 and 692–707; these read EGREFEAEGRQQGDSSLEERS and GLVREDTRKTPQGKRE.

Forms a ternary complex with MAGI2 and SH3KBP1; recruits DDN to the cytoplasm. Interacts with MAGI1. Interacts with ACTN1 and may interact with WWC1. Interacts with the podocyte slit diaphragm proteins CD2AP, NPHS1 and NPHS2; the interaction with CD2AP and NPHS1 is direct. In terms of tissue distribution, specifically expressed in forebrain structures, particularly in neocortex, olfactory bulb, hippocampus, caudate-putamen, and limbic system (at protein level). Also detected in spleen, liver, kidney and placenta (at protein level).

It localises to the cell projection. The protein resides in the dendritic spine membrane. It is found in the cytoplasm. The protein localises to the endoplasmic reticulum membrane. Its subcellular location is the perikaryon. It localises to the nucleus. Functionally, promotes apoptosis of kidney glomerular podocytes. Podocytes are highly specialized cells essential to the ultrafiltration of blood, resulting in the extraction of urine and the retention of protein. This chain is Dendrin (Ddn), found in Rattus norvegicus (Rat).